The sequence spans 383 residues: Succinyl-diaminopimelate desuccinylase (383 aa).

Histidine 79 serves as a coordination point for Zn(2+). Aspartate 81 is a catalytic residue. Aspartate 110 is a binding site for Zn(2+). Catalysis depends on glutamate 141, which acts as the Proton acceptor. Residues glutamate 142, glutamate 170, and histidine 355 each coordinate Zn(2+).

This sequence belongs to the peptidase M20A family. DapE subfamily. As to quaternary structure, homodimer. Zn(2+) is required as a cofactor. Requires Co(2+) as cofactor.

The catalysed reaction is N-succinyl-(2S,6S)-2,6-diaminopimelate + H2O = (2S,6S)-2,6-diaminopimelate + succinate. It participates in amino-acid biosynthesis; L-lysine biosynthesis via DAP pathway; LL-2,6-diaminopimelate from (S)-tetrahydrodipicolinate (succinylase route): step 3/3. Catalyzes the hydrolysis of N-succinyl-L,L-diaminopimelic acid (SDAP), forming succinate and LL-2,6-diaminopimelate (DAP), an intermediate involved in the bacterial biosynthesis of lysine and meso-diaminopimelic acid, an essential component of bacterial cell walls. This chain is Succinyl-diaminopimelate desuccinylase, found in Helicobacter pylori (strain P12).